Reading from the N-terminus, the 122-residue chain is Large ribosomal subunit protein bL12 (122 aa).

It belongs to the bacterial ribosomal protein bL12 family. In terms of assembly, homodimer. Part of the ribosomal stalk of the 50S ribosomal subunit. Forms a multimeric L10(L12)X complex, where L10 forms an elongated spine to which 2 to 4 L12 dimers bind in a sequential fashion. Binds GTP-bound translation factors.

Functionally, forms part of the ribosomal stalk which helps the ribosome interact with GTP-bound translation factors. Is thus essential for accurate translation. This chain is Large ribosomal subunit protein bL12, found in Yersinia pseudotuberculosis serotype O:1b (strain IP 31758).